The chain runs to 322 residues: Extracellular metalloprotease AFUA_1G07730 (322 aa).

An N-terminal signal peptide occupies residues 1–22 (MLPFNSCVYVLLIISLMSNCRA). 2 N-linked (GlcNAc...) asparagine glycosylation sites follow: Asn-123 and Asn-197. His-233 is a Zn(2+) binding site. Residue Glu-234 is part of the active site. His-237 is a Zn(2+) binding site. The cysteines at positions 272 and 299 are disulfide-linked.

Belongs to the peptidase M43B family.

The protein localises to the secreted. Secreted metalloproteinase that allows assimilation of proteinaceous substrates. Plays a pivotal role as a pathogenicity determinant during infections and contributes to the ability of the pathogen to persist within the mammalian host. The chain is Extracellular metalloprotease AFUA_1G07730 from Aspergillus fumigatus (strain ATCC MYA-4609 / CBS 101355 / FGSC A1100 / Af293) (Neosartorya fumigata).